The primary structure comprises 648 residues: Macrolide export ATP-binding/permease protein MacB (648 aa).

Residues 1–272 lie on the Cytoplasmic side of the membrane; the sequence is MTPLLELKDI…RALAANKMRT (272 aa). Residues 5–243 enclose the ABC transporter domain; that stretch reads LELKDIRRSY…TGGTEPVVNT (239 aa). 41–48 is a binding site for ATP; sequence GASGSGKS. The helical transmembrane segment at 273-293 threads the bilayer; it reads LLTMLGIIIGIASVVSIVVVG. The Periplasmic portion of the chain corresponds to 294 to 522; the sequence is DAAKQMVLAD…TVEKTTRTLQ (229 aa). Residues 523-543 traverse the membrane as a helical segment; the sequence is LFLTLVAVISLVVGGIGVMNI. Residues 544 to 575 are Cytoplasmic-facing; that stretch reads MLVSVTERTREIGIRMAVGARASDVLQQFLIE. Residues 576–596 form a helical membrane-spanning segment; it reads AVLVCLVGGALGITLSLLIAF. The Periplasmic segment spans residues 597–610; it reads TLQLFLPGWEIGFS. The chain crosses the membrane as a helical span at residues 611-631; it reads PLALLLAFLCSTVTGILFGWL. Over 632-648 the chain is Cytoplasmic; the sequence is PARNAARLDPVDALARE.

It belongs to the ABC transporter superfamily. Macrolide exporter (TC 3.A.1.122) family. In terms of assembly, homodimer. Part of the tripartite efflux system MacAB-TolC, which is composed of an inner membrane transporter, MacB, a periplasmic membrane fusion protein, MacA, and an outer membrane component, TolC. The complex forms a large protein conduit and can translocate molecules across both the inner and outer membranes. Interacts with MacA.

The protein resides in the cell inner membrane. With respect to regulation, ATPase activity is stimulated by interaction with MacA and inhibited by vanadate. Its function is as follows. Part of the tripartite efflux system MacAB-TolC. MacB is a non-canonical ABC transporter that contains transmembrane domains (TMD), which form a pore in the inner membrane, and an ATP-binding domain (NBD), which is responsible for energy generation. When overexpressed, the system confers resistance against macrolides composed of 14- and 15-membered lactones but no or weak resistance against 16-membered ones. In addition, the system could also transport R-LPS or a similar glycolipid. This chain is Macrolide export ATP-binding/permease protein MacB, found in Escherichia coli (strain K12).